Consider the following 149-residue polypeptide: Transcriptional repressor NrdR (149 aa).

Residues Cys-3 to Cys-34 fold into a zinc finger. An ATP-cone domain is found at Pro-49–Glu-139.

The protein belongs to the NrdR family. Requires Zn(2+) as cofactor.

Functionally, negatively regulates transcription of bacterial ribonucleotide reductase nrd genes and operons by binding to NrdR-boxes. The chain is Transcriptional repressor NrdR from Aliivibrio fischeri (strain ATCC 700601 / ES114) (Vibrio fischeri).